We begin with the raw amino-acid sequence, 180 residues long: ATP synthase subunit b (180 aa).

A helical transmembrane segment spans residues 26-48; that stretch reads SMILFWKAVNTVILLGLVYYFGG.

Belongs to the ATPase B chain family. As to quaternary structure, F-type ATPases have 2 components, F(1) - the catalytic core - and F(0) - the membrane proton channel. F(1) has five subunits: alpha(3), beta(3), gamma(1), delta(1), epsilon(1). F(0) has three main subunits: a(1), b(2) and c(10-14). The alpha and beta chains form an alternating ring which encloses part of the gamma chain. F(1) is attached to F(0) by a central stalk formed by the gamma and epsilon chains, while a peripheral stalk is formed by the delta and b chains.

Its subcellular location is the cell inner membrane. In terms of biological role, f(1)F(0) ATP synthase produces ATP from ADP in the presence of a proton or sodium gradient. F-type ATPases consist of two structural domains, F(1) containing the extramembraneous catalytic core and F(0) containing the membrane proton channel, linked together by a central stalk and a peripheral stalk. During catalysis, ATP synthesis in the catalytic domain of F(1) is coupled via a rotary mechanism of the central stalk subunits to proton translocation. Component of the F(0) channel, it forms part of the peripheral stalk, linking F(1) to F(0). The polypeptide is ATP synthase subunit b (Sulfurihydrogenibium sp. (strain YO3AOP1)).